The chain runs to 574 residues: DNA-directed primase/polymerase protein (574 aa).

Residues 2 to 22 (KRKWEERVKKVEELASYYERN) adopt a coiled-coil conformation. Substrate is bound by residues Arg76, 116 to 118 (DLE), 167 to 171 (KFSRH), 291 to 294 (RNFR), and Lys300. Positions 116 and 118 each coordinate Mn(2+). Zn(2+)-binding residues include Cys424, His431, Cys451, and Cys456. A Zinc knuckle motif motif is present at residues 424-457 (CENIGRAHRSNNIMILVDLKKEVWYQKCHDPVCR).

This sequence belongs to the eukaryotic-type primase small subunit family. Requires Mn(2+) as cofactor.

The protein localises to the nucleus. The protein resides in the mitochondrion matrix. It is found in the chromosome. It catalyses the reaction ssDNA + n NTP = ssDNA/pppN(pN)n-1 hybrid + (n-1) diphosphate.. The enzyme catalyses DNA(n) + a 2'-deoxyribonucleoside 5'-triphosphate = DNA(n+1) + diphosphate. Its function is as follows. DNA primase and DNA polymerase required to tolerate replication-stalling lesions by bypassing them. Required to facilitate mitochondrial and nuclear replication fork progression by initiating de novo DNA synthesis using dNTPs and acting as an error-prone DNA polymerase able to bypass certain DNA lesions. Shows a high capacity to tolerate DNA damage lesions such as 8oxoG and abasic sites in DNA. Provides different translesion synthesis alternatives when DNA replication is stalled: able to synthesize DNA primers downstream of lesions, such as UV lesions, R-loops and G-quadruplexes, to allow DNA replication to continue. Can also realign primers ahead of 'unreadable lesions' such as abasic sites and 6-4 photoproduct (6-4 pyrimidine-pyrimidinone), thereby skipping the lesion. Repriming avoids fork degradation while leading to accumulation of internal ssDNA gaps behind the forks. Also able to incorporate nucleotides opposite DNA lesions such as 8oxoG, like a regular translesion synthesis DNA polymerase. Also required for reinitiating stalled forks after ultraviolet (UV) damage during nuclear DNA replication. Required for mitochondrial DNA (mtDNA) synthesis and replication, by reinitiating synthesis after UV damage or in the presence of chain-terminating nucleotides. In addition to its role in DNA damage response, also required to maintain efficient nuclear and mitochondrial DNA replication in unperturbed cells. This chain is DNA-directed primase/polymerase protein, found in Gallus gallus (Chicken).